Consider the following 131-residue polypeptide: uncharacterized protein (131 aa).

The next 4 membrane-spanning stretches (helical) occupy residues 7 to 29 (LLKFLIQAFMWFAIASEFVSLLY), 49 to 69 (LVKVLNVIIIYELFTTLLIAL), 76 to 98 (LILIIDTAMIFFIRELLIVLFTY), and 102 to 124 (ELSEGIASALILGTLGILRFLYL).

The protein resides in the cell membrane. This is an uncharacterized protein from Aquifex aeolicus (strain VF5).